The primary structure comprises 259 residues: Aminoglycoside 3'-phosphotransferase (259 aa).

Asp187 (proton acceptor) is an active-site residue.

The protein belongs to the aminoglycoside phosphotransferase family.

The catalysed reaction is kanamycin A + ATP = kanamycin 3'-phosphate + ADP + H(+). In terms of biological role, resistance to kanamycin and structurally-related aminoglycosides, including amikacin. The protein is Aminoglycoside 3'-phosphotransferase (aphA-6) of Acinetobacter baumannii.